A 173-amino-acid chain; its full sequence is Signal peptidase complex catalytic subunit SEC11 (173 aa).

The Cytoplasmic portion of the chain corresponds to 1 to 15; sequence MLGVSGMQPRQLAAQ. A helical; Signal-anchor for type II membrane protein membrane pass occupies residues 16-36; sequence ILNFALVLSTAFMMWKGLSVV. The Lumenal portion of the chain corresponds to 37-173; the sequence is SDSSSPIVVV…MGVMVVLQRE (137 aa). Catalysis depends on charge relay system residues serine 50, histidine 89, and aspartate 115. The segment at 159–170 is C-terminal short (CTS) helix; the sequence is VMLGLMGVMVVL.

This sequence belongs to the peptidase S26B family. In terms of assembly, component of the signal peptidase complex (SPC) composed of a catalytic subunit SEC11 and three accessory subunits SPC1, SPC2 and SPC3. The complex induces a local thinning of the ER membrane which is used to measure the length of the signal peptide (SP) h-region of protein substrates. This ensures the selectivity of the complex towards h-regions shorter than 18-20 amino acids. SPC associates with the translocon complex.

The protein resides in the endoplasmic reticulum membrane. The catalysed reaction is Cleavage of hydrophobic, N-terminal signal or leader sequences from secreted and periplasmic proteins.. In terms of biological role, catalytic component of the signal peptidase complex (SPC) which catalyzes the cleavage of N-terminal signal sequences from nascent proteins as they are translocated into the lumen of the endoplasmic reticulum. Specifically cleaves N-terminal signal peptides that contain a hydrophobic alpha-helix (h-region) shorter than 18-20 amino acids. The polypeptide is Signal peptidase complex catalytic subunit SEC11 (SEC11) (Leptosphaeria maculans (strain JN3 / isolate v23.1.3 / race Av1-4-5-6-7-8) (Blackleg fungus)).